The primary structure comprises 878 residues: Fanconi-associated nuclease 1 homolog (878 aa).

The UBZ4-type zinc finger occupies 32-59 (GKTCPLCNIKFSLASYRSHMNVCKVADD). Cys-35, Cys-38, His-50, and Cys-54 together coordinate Zn(2+). Positions 88–180 (ENSGQEIPVN…QKSQSESQEA (93 aa)) are disordered. Basic and acidic residues predominate over residues 142-161 (SEVRSVEKEIKKSPVWENRR). Residues 168-179 (QNSQKSQSESQE) are compositionally biased toward low complexity. Mn(2+)-binding residues include Glu-695, Asp-823, Glu-838, and Val-839. The region spanning 757 to 870 (QETIEDNIRR…GIKAEVCHVE (114 aa)) is the VRR-NUC domain.

This sequence belongs to the FAN1 family. Requires Mn(2+) as cofactor. Mg(2+) serves as cofactor.

The protein resides in the nucleus. It carries out the reaction Hydrolytically removes 5'-nucleotides successively from the 3'-hydroxy termini of 3'-hydroxy-terminated oligonucleotides.. Functionally, nuclease required for the repair of DNA interstrand cross-links (ICL). Acts as a 5'-3' exonuclease that anchors at a cut end of DNA and cleaves DNA successively at every third nucleotide, allowing to excise an ICL from one strand through flanking incisions. The polypeptide is Fanconi-associated nuclease 1 homolog (fan-1) (Caenorhabditis briggsae).